The following is a 169-amino-acid chain: uncharacterized protein (169 aa).

The 131-residue stretch at 32-162 (CNFRVVNSFV…EPAKSDLIKL (131 aa)) folds into the Nudix hydrolase domain. The Nudix box signature appears at 69 to 91 (GGHVESGETYEDALQRELEEELN). Mg(2+) is bound by residues E85 and E89.

Belongs to the Nudix hydrolase family. Mg(2+) serves as cofactor.

This is an uncharacterized protein from Nostoc sp. (strain PCC 7120 / SAG 25.82 / UTEX 2576).